A 448-amino-acid chain; its full sequence is UDP-N-acetylmuramoylalanine--D-glutamate ligase (448 aa).

116-122 contacts ATP; sequence GSNAKST.

It belongs to the MurCDEF family.

It localises to the cytoplasm. It carries out the reaction UDP-N-acetyl-alpha-D-muramoyl-L-alanine + D-glutamate + ATP = UDP-N-acetyl-alpha-D-muramoyl-L-alanyl-D-glutamate + ADP + phosphate + H(+). Its pathway is cell wall biogenesis; peptidoglycan biosynthesis. In terms of biological role, cell wall formation. Catalyzes the addition of glutamate to the nucleotide precursor UDP-N-acetylmuramoyl-L-alanine (UMA). The protein is UDP-N-acetylmuramoylalanine--D-glutamate ligase of Pseudomonas syringae pv. syringae (strain B728a).